A 278-amino-acid polypeptide reads, in one-letter code: Octanoyl-[GcvH]:protein N-octanoyltransferase (278 aa).

The BPL/LPL catalytic domain occupies serine 44–leucine 249. Cysteine 148 (acyl-thioester intermediate) is an active-site residue.

Belongs to the octanoyltransferase LipL family.

It carries out the reaction N(6)-octanoyl-L-lysyl-[glycine-cleavage complex H protein] + L-lysyl-[lipoyl-carrier protein] = N(6)-octanoyl-L-lysyl-[lipoyl-carrier protein] + L-lysyl-[glycine-cleavage complex H protein]. The protein operates within protein modification; protein lipoylation via endogenous pathway; protein N(6)-(lipoyl)lysine from octanoyl-[acyl-carrier-protein]. Functionally, catalyzes the amidotransfer (transamidation) of the octanoyl moiety from octanoyl-GcvH to the lipoyl domain of the E2 subunit of lipoate-dependent enzymes. This is Octanoyl-[GcvH]:protein N-octanoyltransferase from Halalkalibacterium halodurans (strain ATCC BAA-125 / DSM 18197 / FERM 7344 / JCM 9153 / C-125) (Bacillus halodurans).